The chain runs to 1224 residues: uncharacterized protein (1224 aa).

Disordered stretches follow at residues 1–67, 111–151, 193–270, 316–416, 430–957, and 1078–1167; these read MNQD…SSSI, QQSH…PPPL, QTEL…DPNI, DYNN…TVKK, SDSG…QEEK, and SFLP…TSHV. A compositionally biased stretch (low complexity) spans 10-48; it reads SFHSNNNSNSNHHHSYNNSINSGSSSSGSNNSSNNNSFN. The segment covering 49-58 has biased composition (acidic residues); the sequence is DEIEGGEIQE. Low complexity-rich tracts occupy residues 126 to 140, 193 to 212, and 228 to 241; these read SSSS…SSSS, QTEL…SSPP, and SAPT…SVSS. The span at 242–255 shows a compositional bias: polar residues; sequence LTQPQKPKSVQYSQ. Basic and acidic residues predominate over residues 260–270; that stretch reads EIREEKVDPNI. Over residues 316 to 338 the composition is skewed to low complexity; sequence DYNNSNSNNSNNNNNNNNSITEN. The span at 341–353 shows a compositional bias: polar residues; the sequence is DKMINNQPSSTNS. 2 stretches are compositionally biased toward low complexity: residues 379–413 and 430–450; these read TTTT…TTPT and SDSG…TSTP. Basic and acidic residues-rich tracts occupy residues 451 to 585 and 630 to 646; these read KSKD…DKKK and EIDK…KVES. The segment covering 662–719 has biased composition (low complexity); sequence TTTTTTSTSSSSSLPSLSSSSSSLPLPSSSSSSSSSSSSSSSSSSSSSSSSSSSTTST. Residues 727-750 show a composition bias toward pro residues; it reads PPPPPQQPPPPPPQQPPPPPPPIN. Over residues 755–892 the composition is skewed to basic and acidic residues; sequence SEHDKKIIEK…SDRDRDRKDS (138 aa). Positions 893-933 are enriched in low complexity; it reads NSNNNSNNNNNNNNNNNNNNNNNNNNKKDNNNNNNNNNNNN. The segment covering 948–957 has biased composition (basic and acidic residues); sequence TPKKTKQEEK. Residues 950-991 adopt a coiled-coil conformation; it reads KKTKQEEKLIRSQIDQIKEDAKDLKKLAKELQSKNQNECLEM. 2 stretches are compositionally biased toward low complexity: residues 1078–1108 and 1114–1165; these read SFLP…TAPL and NPSE…PNTS.

This is an uncharacterized protein from Dictyostelium discoideum (Social amoeba).